The primary structure comprises 565 residues: Protein unc-87 (565 aa).

The span at 1 to 27 (MLSFNNTTSASSFQSASSRYLMSSSSS) shows a compositional bias: low complexity. 2 disordered regions span residues 1–83 (MLSF…TTNS) and 237–262 (IPSQ…RNTN). Basic and acidic residues predominate over residues 54 to 69 (EALERLRPNTASRERN). Calponin-like repeat units lie at residues 237-262 (IPSQ…RNTN), 285-310 (VRLQ…RDVC), and 338-363 (VRLQ…RRET). The segment covering 250–262 (KLMTNFGTPRNTN) has biased composition (polar residues). The segment covering 369–381 (SKHPEYDHEKPDQ) has biased composition (basic and acidic residues). Positions 369–400 (SKHPEYDHEKPDQSEIPLQSGTNKFASQKGMT) are disordered. Positions 384 to 398 (IPLQSGTNKFASQKG) are enriched in polar residues. 4 Calponin-like repeats span residues 384-409 (IPLQ…RRET), 431-456 (IPSQ…RWEV), 472-497 (VRLQ…RNTT), and 517-542 (IPSQ…RDVK).

This sequence belongs to the calponin family. In terms of assembly, monomer. Interacts with F-actin. Interacts with myosin. Expressed in the body wall muscles. Isoform a: Expression in the pharynx, anal depressor muscle, uterine muscle, vulva and unidentified neurons in the head and the ventral region. Isoform b: Expression in the body wall muscles, spermatheca, vulva and in the myoepithelial sheath.

Its subcellular location is the cytoplasm. It is found in the myofibril. It localises to the sarcomere. The protein localises to the i band. Functionally, thin filament-associated protein that is implicated in actin bundling and actin filament dynamics. Exhibits F-actin cross-linking activity. Required for the maintenance of sarcomeric actin organization in striated muscles. Competes with unc-60 isoform b for actin binding and protects actin filaments from depolymerization by unc-60, thereby contributing to actin filament stability. Cooperates with myosin to form actomyosin bundles and inhibits actomyosin ATPase activity and actomyosin motility. Might protect the myofilaments from mechanical stress. Its function is as follows. Acts as a negative regulator of myosin-dependent contractility of smooth muscle-like cells in the somatic gonad. The sequence is that of Protein unc-87 (unc-87) from Caenorhabditis elegans.